The primary structure comprises 356 residues: Alanine racemase, catabolic (356 aa).

K35 acts as the Proton acceptor; specific for D-alanine in catalysis. Residue K35 is modified to N6-(pyridoxal phosphate)lysine. Substrate is bound at residue R130. Y253 serves as the catalytic Proton acceptor; specific for L-alanine. M301 is a binding site for substrate.

Belongs to the alanine racemase family. Requires pyridoxal 5'-phosphate as cofactor.

The catalysed reaction is L-alanine = D-alanine. Functionally, isomerizes L-alanine to D-alanine which is then oxidized to pyruvate by DadA. The polypeptide is Alanine racemase, catabolic (dadX) (Escherichia coli O157:H7).